We begin with the raw amino-acid sequence, 170 residues long: Shikimate kinase (170 aa).

11-16 (LSGKST) is an ATP binding site. Mg(2+) is bound at residue Ser15. Residues Asp33, Arg57, and Gly79 each contribute to the substrate site. Arg119 contacts ATP. Arg137 contributes to the substrate binding site.

Belongs to the shikimate kinase family. In terms of assembly, monomer. Requires Mg(2+) as cofactor.

It localises to the cytoplasm. It carries out the reaction shikimate + ATP = 3-phosphoshikimate + ADP + H(+). It participates in metabolic intermediate biosynthesis; chorismate biosynthesis; chorismate from D-erythrose 4-phosphate and phosphoenolpyruvate: step 5/7. Functionally, catalyzes the specific phosphorylation of the 3-hydroxyl group of shikimic acid using ATP as a cosubstrate. This is Shikimate kinase from Clostridium botulinum (strain ATCC 19397 / Type A).